The sequence spans 99 residues: NADH-quinone oxidoreductase subunit K (99 aa).

The next 3 membrane-spanning stretches (helical) occupy residues 2–22 (PVEYYLWLASILFGIGLLGVL), 28–48 (LILMMSVELMLNAANLTFLAF), and 60–80 (IAFFVIAVAAAEAAVGLAVVI).

The protein belongs to the complex I subunit 4L family. In terms of assembly, NDH-1 is composed of 14 different subunits. Subunits NuoA, H, J, K, L, M, N constitute the membrane sector of the complex.

It localises to the cell inner membrane. The enzyme catalyses a quinone + NADH + 5 H(+)(in) = a quinol + NAD(+) + 4 H(+)(out). Functionally, NDH-1 shuttles electrons from NADH, via FMN and iron-sulfur (Fe-S) centers, to quinones in the respiratory chain. The immediate electron acceptor for the enzyme in this species is believed to be ubiquinone. Couples the redox reaction to proton translocation (for every two electrons transferred, four hydrogen ions are translocated across the cytoplasmic membrane), and thus conserves the redox energy in a proton gradient. The protein is NADH-quinone oxidoreductase subunit K of Anaeromyxobacter dehalogenans (strain 2CP-C).